The sequence spans 205 residues: ATP-dependent Clp protease proteolytic subunit (205 aa).

The active-site Nucleophile is Ser98. His123 is an active-site residue.

Belongs to the peptidase S14 family. In terms of assembly, fourteen ClpP subunits assemble into 2 heptameric rings which stack back to back to give a disk-like structure with a central cavity, resembling the structure of eukaryotic proteasomes.

The protein localises to the cytoplasm. The catalysed reaction is Hydrolysis of proteins to small peptides in the presence of ATP and magnesium. alpha-casein is the usual test substrate. In the absence of ATP, only oligopeptides shorter than five residues are hydrolyzed (such as succinyl-Leu-Tyr-|-NHMec, and Leu-Tyr-Leu-|-Tyr-Trp, in which cleavage of the -Tyr-|-Leu- and -Tyr-|-Trp bonds also occurs).. Functionally, cleaves peptides in various proteins in a process that requires ATP hydrolysis. Has a chymotrypsin-like activity. Plays a major role in the degradation of misfolded proteins. This is ATP-dependent Clp protease proteolytic subunit from Desulforapulum autotrophicum (strain ATCC 43914 / DSM 3382 / VKM B-1955 / HRM2) (Desulfobacterium autotrophicum).